The sequence spans 129 residues: Glycoprotein hormone alpha-2 (129 aa).

Residues 1-23 (MPMASPQTLVLYLLVLAVTEAWG) form the signal peptide. Intrachain disulfides connect cysteine 31–cysteine 89, cysteine 48–cysteine 103, cysteine 57–cysteine 119, and cysteine 61–cysteine 121. 2 N-linked (GlcNAc...) asparagine glycosylation sites follow: asparagine 37 and asparagine 81.

The protein belongs to the glycoprotein hormones subunit alpha family. In terms of assembly, heterodimer with GPHB5; this heterodimer interacts with thyroid-stimulating hormone receptor (TSHR), and hence stimulates cAMP production. Post-translationally, glycosylated. Found in a variety of tissues.

The protein localises to the secreted. Functionally, functions as a heterodimeric glycoprotein hormone with GPHB5 able to bind and activate the thyroid-stimulating hormone receptor (TSHR), leading to increased cAMP production. Plays a central role in controlling thyroid cell metabolism. This chain is Glycoprotein hormone alpha-2 (GPHA2), found in Homo sapiens (Human).